A 974-amino-acid chain; its full sequence is GATOR2 complex protein WDR59 (974 aa).

WD repeat units lie at residues 57-98 (QSKW…GEVG), 103-143 (GHTR…KPTV), 146-185 (SAVAGASQVKWNKKNANCLATSHDGDVRIWDKRKPSTAVE), 189-229 (AHLS…KYLN), 232-276 (PCQV…TPVH), 278-318 (FVGH…RVDS), and 319-362 (QMQR…TASH). The tract at residues 350–374 (HTEDTDHQHTASHGEEEALKEDPPR) is disordered. The RWD domain occupies 393-494 (QEFSLINVQI…RQLVSCLESF (102 aa)). Residue Ser-564 is modified to Phosphoserine. One copy of the WD 8 repeat lies at 668-706 (LNVNDIQETCQKNAASALLVGRKDLVQVWSLATVATDLC). Ser-821, Ser-822, and Ser-830 each carry phosphoserine. The segment at 831-852 (LTYSDPRERERDQHDKNKRLLD) is disordered. Basic and acidic residues predominate over residues 835–851 (DPRERERDQHDKNKRLL). A C4-type zinc finger spans residues 901 to 920 (YCSHCRSEVRGTQCAICKGF). Zn(2+) is bound by residues Cys-902, Cys-905, Cys-914, Cys-917, Cys-927, Cys-938, His-943, His-946, His-949, Cys-960, Cys-964, Cys-966, and Cys-968. Residues 921-973 (TFQCAICHVAVRGSSNFCLTCGHGGHTSHMMEWFRTQEVCPTGCGCHCLLEST) form an RING-type; atypical zinc finger.

Belongs to the WD repeat WDR59 family. In terms of assembly, component of the GATOR2 subcomplex, composed of MIOS, SEC13, SEH1L, WDR24 and WDR59. The GATOR2 complex interacts with CASTOR1 and CASTOR2; the interaction is negatively regulated by arginine. The GATOR2 complex interacts with SESN1, SESN2 and SESN3; the interaction is negatively regulated by amino acids. Interacts with DDB1-CUL4A/B E3 ligase complexes.

It is found in the lysosome membrane. Its activity is regulated as follows. The GATOR2 complex is negatively regulated by the upstream amino acid sensors CASTOR1 and SESN2, which sequester the GATOR2 complex in absence of amino acids. In the presence of abundant amino acids, GATOR2 is released from CASTOR1 and SESN2 and activated. Functionally, as a component of the GATOR2 complex, functions as an activator of the amino acid-sensing branch of the mTORC1 signaling pathway. The GATOR2 complex indirectly activates mTORC1 through the inhibition of the GATOR1 subcomplex. GATOR2 probably acts as an E3 ubiquitin-protein ligase toward GATOR1. In the presence of abundant amino acids, the GATOR2 complex mediates ubiquitination of the NPRL2 core component of the GATOR1 complex, leading to GATOR1 inactivation. In the absence of amino acids, GATOR2 is inhibited, activating the GATOR1 complex. In Homo sapiens (Human), this protein is GATOR2 complex protein WDR59.